Reading from the N-terminus, the 341-residue chain is Retinol dehydrogenase 10 (341 aa).

Residues 3 to 23 form a helical; Signal-anchor membrane-spanning segment; sequence IVVEFFLVTFKVLWAFVLAAA. An NADP(+)-binding site is contributed by 40–64; that stretch reads LITGAGSGLGRLFALEFARRRALLV. Residue Ser197 coordinates substrate. The active-site Proton acceptor is Tyr210.

Belongs to the short-chain dehydrogenases/reductases (SDR) family. Detected in retina, entire eyecups and in liver (at protein level).

The protein localises to the microsome membrane. The protein resides in the endoplasmic reticulum membrane. The catalysed reaction is all-trans-retinol + NADP(+) = all-trans-retinal + NADPH + H(+). It participates in cofactor metabolism; retinol metabolism. Functionally, retinol dehydrogenase with a clear preference for NADP. Converts all-trans-retinol to all-trans-retinal. This Rattus norvegicus (Rat) protein is Retinol dehydrogenase 10 (Rdh10).